We begin with the raw amino-acid sequence, 498 residues long: Excisase C (498 aa).

The 184-residue stretch at 263–446 (KIIYSFDLFE…FGIENRKKAF (184 aa)) folds into the Tyr recombinase domain. Active-site residues include arginine 306, lysine 336, arginine 401, and histidine 424. Residue tyrosine 433 is the O-(3'-phospho-DNA)-tyrosine intermediate of the active site.

This sequence belongs to the XisA/XisC recombinase family.

Functionally, essential for DNA excision. Site specific recombinase necessary for the excision of the 10.5 kb hupL element during heterocyst differentiation. The chain is Excisase C (xisC) from Nostoc sp. (strain PCC 7120 / SAG 25.82 / UTEX 2576).